Reading from the N-terminus, the 333-residue chain is Ornithine carbamoyltransferase (333 aa).

Carbamoyl phosphate-binding positions include 56 to 59 (STRT), Arg107, and 134 to 137 (HPTQ). Residues Asn167, Asp231, and 235–236 (SM) contribute to the L-ornithine site. Residues 273–274 (CL) and Arg318 contribute to the carbamoyl phosphate site.

It belongs to the aspartate/ornithine carbamoyltransferase superfamily. OTCase family.

The protein resides in the cytoplasm. The enzyme catalyses carbamoyl phosphate + L-ornithine = L-citrulline + phosphate + H(+). It functions in the pathway amino-acid degradation; L-arginine degradation via ADI pathway; carbamoyl phosphate from L-arginine: step 2/2. Functionally, reversibly catalyzes the transfer of the carbamoyl group from carbamoyl phosphate (CP) to the N(epsilon) atom of ornithine (ORN) to produce L-citrulline. This chain is Ornithine carbamoyltransferase, found in Clostridium botulinum (strain ATCC 19397 / Type A).